The primary structure comprises 296 residues: 33 kDa chaperonin (296 aa).

2 disulfide bridges follow: C238–C240 and C271–C274.

The protein belongs to the HSP33 family. Under oxidizing conditions two disulfide bonds are formed involving the reactive cysteines. Under reducing conditions zinc is bound to the reactive cysteines and the protein is inactive.

It localises to the cytoplasm. Redox regulated molecular chaperone. Protects both thermally unfolding and oxidatively damaged proteins from irreversible aggregation. Plays an important role in the bacterial defense system toward oxidative stress. In Clostridium botulinum (strain Loch Maree / Type A3), this protein is 33 kDa chaperonin.